A 156-amino-acid polypeptide reads, in one-letter code: ATP synthase subunit b', chloroplastic (156 aa).

A helical membrane pass occupies residues Ala-24–Leu-44.

Belongs to the ATPase B chain family. In terms of assembly, F-type ATPases have 2 components, F(1) - the catalytic core - and F(0) - the membrane proton channel. F(1) has five subunits: alpha(3), beta(3), gamma(1), delta(1), epsilon(1). F(0) has four main subunits: a(1), b(1), b'(1) and c(10-14). The alpha and beta chains form an alternating ring which encloses part of the gamma chain. F(1) is attached to F(0) by a central stalk formed by the gamma and epsilon chains, while a peripheral stalk is formed by the delta, b and b' chains.

It is found in the plastid. Its subcellular location is the chloroplast thylakoid membrane. Its function is as follows. F(1)F(0) ATP synthase produces ATP from ADP in the presence of a proton or sodium gradient. F-type ATPases consist of two structural domains, F(1) containing the extramembraneous catalytic core and F(0) containing the membrane proton channel, linked together by a central stalk and a peripheral stalk. During catalysis, ATP synthesis in the catalytic domain of F(1) is coupled via a rotary mechanism of the central stalk subunits to proton translocation. In terms of biological role, component of the F(0) channel, it forms part of the peripheral stalk, linking F(1) to F(0). The b'-subunit is a diverged and duplicated form of b found in plants and photosynthetic bacteria. The protein is ATP synthase subunit b', chloroplastic of Thalassiosira pseudonana (Marine diatom).